We begin with the raw amino-acid sequence, 295 residues long: Movement protein (295 aa).

The segment at 256–295 (KKTNVKEESPTSDPQSGEVSSMTQSVPGAADTRIPKPRRR) is disordered. Positions 266–281 (TSDPQSGEVSSMTQSV) are enriched in polar residues.

This sequence belongs to the bromovirus movement protein family.

It is found in the host cell junction. The protein resides in the host plasmodesma. In terms of biological role, transports viral genome to neighboring plant cells directly through plasmosdesmata, without any budding. The movement protein allows efficient cell to cell propagation, by bypassing the host cell wall barrier. Acts by forming a tubular structure at the host plasmodesmata, enlarging it enough to allow free passage of virion capsids. This is Movement protein from Broad bean mottle virus.